The following is a 130-amino-acid chain: Sirohydrochlorin cobaltochelatase (130 aa).

His12 serves as the catalytic Proton acceptor. Position 12 (His12) interacts with Co(2+). Residue His12 coordinates Ni(2+). Substrate-binding positions include Glu48 and 73–78 (LASGVH). His78 lines the Co(2+) pocket. His78 provides a ligand contact to Ni(2+).

Belongs to the CbiX family. CbiXS subfamily. As to quaternary structure, homotetramer; dimer of dimers.

The enzyme catalyses Co-sirohydrochlorin + 2 H(+) = sirohydrochlorin + Co(2+). It carries out the reaction Ni-sirohydrochlorin + 2 H(+) = sirohydrochlorin + Ni(2+). The protein operates within cofactor biosynthesis; adenosylcobalamin biosynthesis; cob(II)yrinate a,c-diamide from sirohydrochlorin (anaerobic route): step 1/10. Its function is as follows. Catalyzes the insertion of Co(2+) into sirohydrochlorin as part of the anaerobic pathway to cobalamin biosynthesis (Potential). Involved in the biosynthesis of the unique nickel-containing tetrapyrrole coenzyme F430, the prosthetic group of methyl-coenzyme M reductase (MCR), which plays a key role in methanogenesis and anaerobic methane oxidation. Catalyzes the insertion of Ni(2+) into sirohydrochlorin to yield Ni-sirohydrochlorin. This Methanosarcina acetivorans (strain ATCC 35395 / DSM 2834 / JCM 12185 / C2A) protein is Sirohydrochlorin cobaltochelatase.